The sequence spans 181 residues: Heavy metal-associated isoprenylated plant protein 46 (181 aa).

Positions 2–71 constitute an HMA domain; it reads KQKILIRVTM…KVAFAELVSV (70 aa). A disordered region spans residues 74–121; it reads VEPPKKEDEKKGGDGKGAEGKGGDQKGGDKKGPDDKEPPEPKPVPCYP. Over residues 75 to 113 the composition is skewed to basic and acidic residues; the sequence is EPPKKEDEKKGGDGKGAEGKGGDQKGGDKKGPDDKEPPE. The residue at position 178 (C178) is a Cysteine methyl ester. C178 is lipidated: S-farnesyl cysteine. Residues 179–181 constitute a propeptide, removed in mature form; the sequence is KIM.

It belongs to the HIPP family.

In terms of biological role, probable heavy-metal-binding protein. The protein is Heavy metal-associated isoprenylated plant protein 46 of Arabidopsis thaliana (Mouse-ear cress).